The sequence spans 466 residues: Ribulose bisphosphate carboxylase large chain (466 aa).

At K5 the chain carries N6,N6,N6-trimethyllysine. Substrate contacts are provided by N114 and T164. K166 acts as the Proton acceptor in catalysis. Position 168 (K168) interacts with substrate. 3 residues coordinate Mg(2+): K192, D194, and E195. K192 carries the N6-carboxylysine modification. H285 (proton acceptor) is an active-site residue. Substrate-binding residues include R286, H318, and S370.

It belongs to the RuBisCO large chain family. Type I subfamily. In terms of assembly, heterohexadecamer of 8 large chains and 8 small chains; disulfide-linked. The disulfide link is formed within the large subunit homodimers. Mg(2+) is required as a cofactor. In terms of processing, the disulfide bond which can form in the large chain dimeric partners within the hexadecamer appears to be associated with oxidative stress and protein turnover.

The protein localises to the plastid. The protein resides in the chloroplast. The catalysed reaction is 2 (2R)-3-phosphoglycerate + 2 H(+) = D-ribulose 1,5-bisphosphate + CO2 + H2O. The enzyme catalyses D-ribulose 1,5-bisphosphate + O2 = 2-phosphoglycolate + (2R)-3-phosphoglycerate + 2 H(+). Its function is as follows. RuBisCO catalyzes two reactions: the carboxylation of D-ribulose 1,5-bisphosphate, the primary event in carbon dioxide fixation, as well as the oxidative fragmentation of the pentose substrate in the photorespiration process. Both reactions occur simultaneously and in competition at the same active site. This chain is Ribulose bisphosphate carboxylase large chain, found in Vitis aestivalis (Grape).